Reading from the N-terminus, the 125-residue chain is Small ribosomal subunit protein uS13 (125 aa).

Residues 95–125 are disordered; the sequence is GLPVRGQRTKNNCRTRKGKRKTVANKKKATK.

The protein belongs to the universal ribosomal protein uS13 family. As to quaternary structure, part of the 30S ribosomal subunit. Forms a loose heterodimer with protein S19. Forms two bridges to the 50S subunit in the 70S ribosome.

Functionally, located at the top of the head of the 30S subunit, it contacts several helices of the 16S rRNA. In the 70S ribosome it contacts the 23S rRNA (bridge B1a) and protein L5 of the 50S subunit (bridge B1b), connecting the 2 subunits; these bridges are implicated in subunit movement. Contacts the tRNAs in the A and P-sites. The chain is Small ribosomal subunit protein uS13 from Cytophaga hutchinsonii (strain ATCC 33406 / DSM 1761 / CIP 103989 / NBRC 15051 / NCIMB 9469 / D465).